The sequence spans 586 residues: Monoterpene synthase TPS4, chloroplastic (586 aa).

The N-terminal 47 residues, 1 to 47 (MAATRNLSLLAQSSQPWAGIYGSHGSPRPISSWLRRQSIAKTSYICM), are a transit peptide targeting the chloroplast. Mg(2+) contacts are provided by Asp-340, Asp-344, Asp-485, Thr-489, and Glu-493. Residues 340-344 (DDIFD) carry the DDXXD motif motif.

The protein belongs to the terpene synthase family. Tpsg subfamily. As to quaternary structure, monomer. The cofactor is Mg(2+).

The protein localises to the plastid. The protein resides in the chloroplast. The enzyme catalyses (2E)-geranyl diphosphate + H2O = (2E)-geraniol + diphosphate. The protein operates within secondary metabolite biosynthesis; terpenoid biosynthesis. Its function is as follows. Monoterpene synthase involved in the biosynthesis of volatile organic compounds. Mediates the conversion of (2E)-geranyl diphosphate (GPP) into the acyclic monoterpene, geraniol. Does not use (2E,6E)-farnesyl diphosphate (FPP) as substrate. In Cananga odorata (Ylang-ylang tree), this protein is Monoterpene synthase TPS4, chloroplastic.